The chain runs to 251 residues: Adenosylcobinamide-GDP ribazoletransferase (251 aa).

The next 5 helical transmembrane spans lie at 44-64, 114-134, 143-163, 177-197, and 198-218; these read LVGLLAGLVCAGPFLLGLLAG, IGAFGVLGIVFGVLGQVVLAH, GALVWAPVLGRAACVVLAACV, AGATHMTVLFCAGVTAATGVA, and LAGPPAVLAAALPCACAVVWL.

The protein belongs to the CobS family. Mg(2+) is required as a cofactor.

Its subcellular location is the cell inner membrane. The enzyme catalyses alpha-ribazole + adenosylcob(III)inamide-GDP = adenosylcob(III)alamin + GMP + H(+). The catalysed reaction is alpha-ribazole 5'-phosphate + adenosylcob(III)inamide-GDP = adenosylcob(III)alamin 5'-phosphate + GMP + H(+). The protein operates within cofactor biosynthesis; adenosylcobalamin biosynthesis; adenosylcobalamin from cob(II)yrinate a,c-diamide: step 7/7. Functionally, joins adenosylcobinamide-GDP and alpha-ribazole to generate adenosylcobalamin (Ado-cobalamin). Also synthesizes adenosylcobalamin 5'-phosphate from adenosylcobinamide-GDP and alpha-ribazole 5'-phosphate. This Nitratidesulfovibrio vulgaris (strain DSM 19637 / Miyazaki F) (Desulfovibrio vulgaris) protein is Adenosylcobinamide-GDP ribazoletransferase.